A 425-amino-acid chain; its full sequence is Histone-binding protein RBBP4 (425 aa).

Ala2 carries the N-acetylalanine modification. Position 4 is an N6-acetyllysine; alternate (Lys4). A Glycyl lysine isopeptide (Lys-Gly) (interchain with G-Cter in SUMO2); alternate cross-link involves residue Lys4. A Glycyl lysine isopeptide (Lys-Gly) (interchain with G-Cter in ubiquitin); alternate cross-link involves residue Lys4. WD repeat units lie at residues 32–125 (YDLV…NHEG), 126–175 (EVNR…RLRG), 176–223 (HQKE…KTIF), 225–270 (GHTA…HSVD), 271–314 (AHTA…HSFE), 315–371 (SHKD…FIHG), and 372–404 (GHTA…VWQM). At Ser110 the chain carries Phosphoserine. Lys160 carries the post-translational modification N6-acetyllysine; alternate. Residue Lys160 forms a Glycyl lysine isopeptide (Lys-Gly) (interchain with G-Cter in SUMO2); alternate linkage. Phosphoserine is present on Ser355.

Belongs to the WD repeat RBAP46/RBAP48/MSI1 family. In terms of assembly, binds directly to helix 1 of the histone fold of histone H4, a region that is not accessible when H4 is in chromatin. Subunit of the chromatin assembly factor 1 (CAF-1) complex, which is composed of RBBP4, CHAF1B and CHAF1A. Subunit of the core histone deacetylase (HDAC) complex, which is composed of HDAC1, HDAC2, RBBP4 and RBBP7. The core HDAC complex associates with SIN3A, ARID4B/SAP180, SAP18, SAP30, SAP130, SUDS3/SAP45 and possibly ARID4A/RBP1 and ING1 to form the SIN3 HDAC complex. Component of the nucleosome remodeling and deacetylase (NuRD) repressor complex, composed of core proteins MTA1, MTA2, MTA3, RBBP4, RBBP7, HDAC1, HDAC2, MBD2, MBD3, and peripherally associated proteins CDK2AP1, CDK2AP2, GATAD2A, GATAD2B, CHD3, CHD4 and CHD5. The exact stoichiometry of the NuRD complex is unknown, and some subunits such as MBD2 and MBD3, GATAD2A and GATAD2B, and CHD3, CHD4 and CHD5 define mutually exclusive NuRD complexes. Interacts with ZNF512B; the interaction is direct and may play a role in repressing gene expression. The NuRD complex may also interact with MBD3L1 and MBD3L2. Component of the PRC2 complex, which consists of the core subunits EED, EZH1 or EZH2, SUZ12, and RBBP4, and various combinations of accessory subunits including AEBP2, JARID2, PHF19, MTF2 and EPOP. Forms a monomeric PRC2.2 (class 2) complex consisting of at least SUZ12, RBBP4, AEBP2 and JARID2. Forms a dimeric PRC2.1 (class 1, PRC-PCL) complex consisting of at least SUZ12, RBBP4, and PHF19; PHF19 stabilizes the dimeric structure which enhances PRC2 interaction with chromatin. Component of the NURF-1 ISWI chromatin remodeling complex (also called the nucleosome-remodeling factor (NURF) complex) at least composed of SMARCA1 (isoform 2), BPTF, RBBP4 and RBBP7. Within the complex interacts with isoform 2 of SMARCA1. Component of the BPFT-SMARCA1 complex at least composed of SMARCA1 (isoform 1), BPFT, RBBP4 and RBBP7; the complex is catalytically inactive and does not remodel chromatin. Within the complex interacts with isoform 1 of SMARCA1. Interacts with the ISWI chromatin remodeling complex component SMARCA5; the interaction is direct. Interacts with the viral protein-binding domain of the retinoblastoma protein (RB1). Component of the DREAM complex (also named LINC complex) at least composed of E2F4, E2F5, LIN9, LIN37, LIN52, LIN54, MYBL1, MYBL2, RBL1, RBL2, RBBP4, TFDP1 and TFDP2. The complex exists in quiescent cells where it represses cell cycle-dependent genes. It dissociates in S phase when LIN9, LIN37, LIN52 and LIN54 form a subcomplex that binds to MYBL2. Found in a complex composed of at least SINHCAF, SIN3A, HDAC1, SAP30, RBBP4, OGT and TET1. Interacts with ZNF827; the interaction is direct and recruits RBBP4 to telomeres. Interacts with MTA1; the interaction is direct and mutually exclusive with binding histone H4. Interacts with ARMC12 (via ARM domains). Interacts with BRCA1. Interacts with CDK2AP1. Interacts with CREBBP, and this interaction may be enhanced by the binding of phosphorylated CREB1 to CREBBP. Interacts with ERCC6. Interacts with HDAC7. Interacts with PHF6. Interacts with PWWP2B. Interacts with SPEN/MINT. Interacts with SUV39H1.

It localises to the nucleus. The protein resides in the chromosome. Its subcellular location is the telomere. Functionally, core histone-binding subunit that may target chromatin assembly factors, chromatin remodeling factors and histone deacetylases to their histone substrates in a manner that is regulated by nucleosomal DNA. Component of the chromatin assembly factor 1 (CAF-1) complex, which is required for chromatin assembly following DNA replication and DNA repair. Component of the core histone deacetylase (HDAC) complex, which promotes histone deacetylation and consequent transcriptional repression. Component of the nucleosome remodeling and histone deacetylase complex (the NuRD complex), which promotes transcriptional repression by histone deacetylation and nucleosome remodeling. Component of the PRC2 complex, which promotes repression of homeotic genes during development. Component of the NURF (nucleosome remodeling factor) complex. This is Histone-binding protein RBBP4 (RBBP4) from Pongo abelii (Sumatran orangutan).